The sequence spans 421 residues: Synaptotagmin-1 (421 aa).

Over 1–57 the chain is Vesicular; it reads MVSASHPEALAAPVTTVATLVPHNATEPASPGEGKEDAFSKLKQKFMNELHKIPLPP. A glycan (N-linked (GlcNAc...) asparagine) is linked at N24. Residues 58-79 form a helical membrane-spanning segment; the sequence is WALIAIAIVAVLLVVTCCFCVC. Residues C74, C75, C77, C79, and C82 are each lipidated (S-palmitoyl cysteine). At 80–421 the chain is on the cytoplasmic side; it reads KKCLFKKKNK…EVDAMLAVKK (342 aa). The segment at 112 to 141 is disordered; that stretch reads TMKDQALKDDDAETGLTDGEEKEEPKEEEK. The span at 121–133 shows a compositional bias: acidic residues; the sequence is DDAETGLTDGEEK. T128 is modified (phosphothreonine). Residues 135–381 are phospholipid binding; it reads EPKEEEKLGK…AIGKVFVGYN (247 aa). In terms of domain architecture, C2 1 spans 141–260; sequence KLGKLQYSLD…DFGHVTEEWR (120 aa). Ca(2+) is bound by residues L171, D172, and D178. The residue at position 229 (Y229) is a Phosphotyrosine. Ca(2+)-binding residues include D230, F231, D232, S235, K236, and D238. S264 is subject to Phosphoserine. The C2 2 domain maps to 272–405; the sequence is KLGDICFSLR…NPRRPIAQWH (134 aa). Ca(2+)-binding residues include D303 and D309. Phosphoserine occurs at positions 342 and 344. D363, D365, and D371 together coordinate Ca(2+).

It belongs to the synaptotagmin family. Homotetramer. Heterodimer; heterodimerizes with SYT2 in presence of calcium. Interacts with SCAMP5. Interacts with STON2. Forms a complex with SV2B, syntaxin 1 and SNAP25. Interacts with SV2A, SV2B and SV2C. Interacts with RIMS1. Interacts with PRRT2. Interacts with DNAJC5 in a phosphorylation-dependent manner. Interacts (via N-terminus) with RAB3A. Interacts with SYT12. Interacts with calmodulin. Interacts with DNM1 (via C-terminal proline-rich domain (PRD)); this interaction facilitates vesicle fission during clathrin-mediated endocytosis (CME). In terms of assembly, (Microbial infection) Interacts with C.botulinum neurotoxin type B (BoNT/B, botB). Has lower affinity for BoNT/B than Syt2; mutating its residues to match those in Syt2 increases its affinity. As to quaternary structure, (Microbial infection) Interacts with C.botulinum neurotoxin type G (BoNT/G, botG). Ca(2+) is required as a cofactor. Glycosylated. In terms of tissue distribution, expressed in the brain (at protein level). Predominantly expressed in rostral, phylogenetically younger brain regions, and in some endocrine tissues.

It is found in the cytoplasmic vesicle. The protein localises to the secretory vesicle membrane. It localises to the secretory vesicle. The protein resides in the synaptic vesicle membrane. Its subcellular location is the chromaffin granule membrane. It is found in the cytoplasm. Functionally, calcium sensor that participates in triggering neurotransmitter release at the synapse. May have a regulatory role in the membrane interactions during trafficking of synaptic vesicles at the active zone of the synapse. It binds acidic phospholipids with a specificity that requires the presence of both an acidic head group and a diacyl backbone. A Ca(2+)-dependent interaction between synaptotagmin and putative receptors for activated protein kinase C has also been reported. It can bind to at least three additional proteins in a Ca(2+)-independent manner; these are neurexins, syntaxin and AP2. Plays a role in dendrite formation by melanocytes. In terms of biological role, (Microbial infection) Receptor for C.botulinum neurotoxin type B (BoNT/B, botB); interaction is improved in the presence of gangliosides. BoNT/B toxin binds to the membrane proximal vesicular domain of Syt1 (residues 32-51). Its function is as follows. (Microbial infection) Receptor for C.botulinum neurotoxin type G (BoNT/G, botG); unlike the case with BoNT/B, interaction is not improved in the presence of gangliosides. BoNT/G toxin binds to the vesicular domain of Syt1 (residues 32-53). The protein is Synaptotagmin-1 of Rattus norvegicus (Rat).